The sequence spans 428 residues: Serine--tRNA ligase (428 aa).

An L-serine-binding site is contributed by 235 to 237; it reads TAE. ATP is bound at residue 266-268; sequence RSE. Residue E289 participates in L-serine binding. 353–356 lines the ATP pocket; sequence EISS. Residue S389 coordinates L-serine.

This sequence belongs to the class-II aminoacyl-tRNA synthetase family. Type-1 seryl-tRNA synthetase subfamily. In terms of assembly, homodimer. The tRNA molecule binds across the dimer.

Its subcellular location is the cytoplasm. The enzyme catalyses tRNA(Ser) + L-serine + ATP = L-seryl-tRNA(Ser) + AMP + diphosphate + H(+). It catalyses the reaction tRNA(Sec) + L-serine + ATP = L-seryl-tRNA(Sec) + AMP + diphosphate + H(+). It participates in aminoacyl-tRNA biosynthesis; selenocysteinyl-tRNA(Sec) biosynthesis; L-seryl-tRNA(Sec) from L-serine and tRNA(Sec): step 1/1. Functionally, catalyzes the attachment of serine to tRNA(Ser). Is also able to aminoacylate tRNA(Sec) with serine, to form the misacylated tRNA L-seryl-tRNA(Sec), which will be further converted into selenocysteinyl-tRNA(Sec). The protein is Serine--tRNA ligase of Shewanella sp. (strain W3-18-1).